The sequence spans 526 residues: Probable fucosyltransferase 7 (526 aa).

The Cytoplasmic portion of the chain corresponds to 1-4 (MKTK). Residues 5 to 25 (LMITIFSCLLLWSMLLLLSFS) traverse the membrane as a helical; Signal-anchor for type II membrane protein segment. The Lumenal portion of the chain corresponds to 26 to 526 (NIFKHQLLGA…KLVDDTKNEL (501 aa)). Residues Asn211, Asn215, and Asn363 are each glycosylated (N-linked (GlcNAc...) asparagine).

It belongs to the glycosyltransferase 37 family. Expressed in roots, leaves, stems and seedlings.

It is found in the golgi apparatus. It localises to the golgi stack membrane. It participates in protein modification; protein glycosylation. Functionally, may be involved in cell wall biosynthesis. May act as a fucosyltransferase. In Arabidopsis thaliana (Mouse-ear cress), this protein is Probable fucosyltransferase 7 (FUT7).